We begin with the raw amino-acid sequence, 251 residues long: Triosephosphate isomerase (251 aa).

9 to 11 (NWK) contacts substrate. The Electrophile role is filled by H96. Catalysis depends on E167, which acts as the Proton acceptor. Residues G173, S213, and 234-235 (GG) each bind substrate.

This sequence belongs to the triosephosphate isomerase family. In terms of assembly, homodimer.

The protein localises to the cytoplasm. The enzyme catalyses D-glyceraldehyde 3-phosphate = dihydroxyacetone phosphate. Its pathway is carbohydrate biosynthesis; gluconeogenesis. The protein operates within carbohydrate degradation; glycolysis; D-glyceraldehyde 3-phosphate from glycerone phosphate: step 1/1. Involved in the gluconeogenesis. Catalyzes stereospecifically the conversion of dihydroxyacetone phosphate (DHAP) to D-glyceraldehyde-3-phosphate (G3P). In Phocaeicola vulgatus (strain ATCC 8482 / DSM 1447 / JCM 5826 / CCUG 4940 / NBRC 14291 / NCTC 11154) (Bacteroides vulgatus), this protein is Triosephosphate isomerase.